The following is a 271-amino-acid chain: Cartilage-associated protein (271 aa).

A signal peptide spans 1-15; it reads MWRTLLAALLATAGA. N-linked (GlcNAc...) asparagine glycosylation is present at N76.

The protein belongs to the leprecan family. As to expression, found in articular chondrocytes. Expressed in a variety of tissues.

Its subcellular location is the secreted. It is found in the extracellular space. The protein localises to the extracellular matrix. In terms of biological role, necessary for efficient 3-hydroxylation of fibrillar collagen prolyl residues. This is Cartilage-associated protein (CRTAP) from Gallus gallus (Chicken).